We begin with the raw amino-acid sequence, 311 residues long: Probable hydrogen peroxide-inducible genes activator (311 aa).

Residues 8-65 (PTIAGLRAFVAVVEKGHFSAAASFLGVRQSTLSQALAALESGLGVQLIERSTRRVFVT) form the HTH lysR-type domain. Residues 25–44 (FSAAASFLGVRQSTLSQALA) constitute a DNA-binding region (H-T-H motif).

This sequence belongs to the LysR transcriptional regulatory family.

Required for the induction the katG gene for catalase. Involved in the response to hydrogen peroxide. This Mycobacterium leprae (strain TN) protein is Probable hydrogen peroxide-inducible genes activator (oxyR).